We begin with the raw amino-acid sequence, 64 residues long: Large ribosomal subunit protein uL30 (64 aa).

The protein belongs to the universal ribosomal protein uL30 family. In terms of assembly, part of the 50S ribosomal subunit.

The polypeptide is Large ribosomal subunit protein uL30 (Rhodopseudomonas palustris (strain BisB18)).